Consider the following 256-residue polypeptide: Ras-related protein RabJ (256 aa).

16 to 23 is a binding site for GTP; the sequence is GSSDVGKT. An Effector region motif is present at residues 38 to 46; it reads LTSTIGASF. Residues 64–68 and 122–125 each bind GTP; these read DSAGQ and NKID. The disordered stretch occupies residues 229-256; sequence NGHLQGSINGHNNQNSTNYSDNSDQCCG. Polar residues predominate over residues 230-256; that stretch reads GHLQGSINGHNNQNSTNYSDNSDQCCG. S-geranylgeranyl cysteine attachment occurs at residues C254 and C255.

It belongs to the small GTPase superfamily. Rab family.

The protein localises to the cell membrane. This Dictyostelium discoideum (Social amoeba) protein is Ras-related protein RabJ (rabJ).